A 119-amino-acid polypeptide reads, in one-letter code: Large ribosomal subunit protein uL14 (119 aa).

This sequence belongs to the universal ribosomal protein uL14 family. As to quaternary structure, part of the 50S ribosomal subunit. Forms a cluster with proteins L3 and L19. In the 70S ribosome, L14 and L19 interact and together make contacts with the 16S rRNA in bridges B5 and B8.

Its function is as follows. Binds to 23S rRNA. Forms part of two intersubunit bridges in the 70S ribosome. The polypeptide is Large ribosomal subunit protein uL14 (Neorickettsia sennetsu (strain ATCC VR-367 / Miyayama) (Ehrlichia sennetsu)).